The following is a 373-amino-acid chain: Probable peptidoglycan glycosyltransferase FtsW (373 aa).

9 helical membrane passes run 15–35, 48–68, 80–100, 144–164, 168–188, 192–212, 278–298, 311–331, and 342–362; these read LVIL…VYSA, FYFL…MAVA, AVPI…PGIG, FFST…LILL, DLGA…AAGT, YIIA…MNVD, LGLI…LRGV, FLAF…MAVV, and LPFI…VGIL.

Belongs to the SEDS family. FtsW subfamily.

It is found in the cell inner membrane. The catalysed reaction is [GlcNAc-(1-&gt;4)-Mur2Ac(oyl-L-Ala-gamma-D-Glu-L-Lys-D-Ala-D-Ala)](n)-di-trans,octa-cis-undecaprenyl diphosphate + beta-D-GlcNAc-(1-&gt;4)-Mur2Ac(oyl-L-Ala-gamma-D-Glu-L-Lys-D-Ala-D-Ala)-di-trans,octa-cis-undecaprenyl diphosphate = [GlcNAc-(1-&gt;4)-Mur2Ac(oyl-L-Ala-gamma-D-Glu-L-Lys-D-Ala-D-Ala)](n+1)-di-trans,octa-cis-undecaprenyl diphosphate + di-trans,octa-cis-undecaprenyl diphosphate + H(+). Its pathway is cell wall biogenesis; peptidoglycan biosynthesis. Its function is as follows. Peptidoglycan polymerase that is essential for cell division. The polypeptide is Probable peptidoglycan glycosyltransferase FtsW (Geobacter sulfurreducens (strain DL-1 / KN400)).